The sequence spans 542 residues: Hydroxylamine reductase (542 aa).

[4Fe-4S] cluster contacts are provided by Cys5, Cys8, Cys17, and Cys23. Residues His237, Glu261, Cys305, Cys397, Cys425, Cys450, Glu485, and Lys487 each coordinate hybrid [4Fe-2O-2S] cluster. Position 397 is a cysteine persulfide (Cys397).

The protein belongs to the HCP family. [4Fe-4S] cluster is required as a cofactor. It depends on hybrid [4Fe-2O-2S] cluster as a cofactor.

The protein resides in the cytoplasm. The enzyme catalyses A + NH4(+) + H2O = hydroxylamine + AH2 + H(+). Functionally, catalyzes the reduction of hydroxylamine to form NH(3) and H(2)O. This chain is Hydroxylamine reductase, found in Acetivibrio thermocellus (strain ATCC 27405 / DSM 1237 / JCM 9322 / NBRC 103400 / NCIMB 10682 / NRRL B-4536 / VPI 7372) (Clostridium thermocellum).